Here is a 378-residue protein sequence, read N- to C-terminus: MTNIRKPPLLKIVNHSFIDLPAPSNISAWWNFGSLLGLCLVIQILTGLFLAMHYTSDTMTAFSSVTHICRDVNYGWLIRYMHANGASMFFICLFLHVGRGLYYGSYTYFETWNIGVILLFAVMATAFMGYVLPWGQMSFWGATVITNLLSAIPYIGTTLVEWIWGGFSVDKATLTRFFAFHFILPFIVAALVMVHLLFLHETGSNNPSGLISDSDKIPFHPYYTIKDALGIFLLLLLFMTLVLFFPDLLGDPDNYTPANPLNTPPHIKPEWYFLFAYAILRSIPNKLGGVLALIFSILILMMFPILHVSKQRSMMFRPLSQCLFWILVADLFTLTWIGGQPVEHPFITIGQVASIIYFVIILFALPIISMLENKLLKW.

Helical transmembrane passes span 32 to 52 (FGSL…FLAM), 76 to 97 (WLIR…FLHV), 112 to 132 (WNIG…GYVL), and 177 to 197 (FFAF…VHLL). The heme b site is built by His82 and His96. Heme b contacts are provided by His181 and His195. His200 contacts a ubiquinone. 4 consecutive transmembrane segments (helical) span residues 225–245 (IKDA…VLFF), 287–307 (LGGV…PILH), 319–339 (LSQC…WIGG), and 346–366 (FITI…FALP).

It belongs to the cytochrome b family. The cytochrome bc1 complex contains 11 subunits: 3 respiratory subunits (MT-CYB, CYC1 and UQCRFS1), 2 core proteins (UQCRC1 and UQCRC2) and 6 low-molecular weight proteins (UQCRH/QCR6, UQCRB/QCR7, UQCRQ/QCR8, UQCR10/QCR9, UQCR11/QCR10 and a cleavage product of UQCRFS1). This cytochrome bc1 complex then forms a dimer. Heme b serves as cofactor.

The protein localises to the mitochondrion inner membrane. Component of the ubiquinol-cytochrome c reductase complex (complex III or cytochrome b-c1 complex) that is part of the mitochondrial respiratory chain. The b-c1 complex mediates electron transfer from ubiquinol to cytochrome c. Contributes to the generation of a proton gradient across the mitochondrial membrane that is then used for ATP synthesis. The sequence is that of Cytochrome b (MT-CYB) from Sciurus aberti (Abert's squirrel).